Here is a 124-residue protein sequence, read N- to C-terminus: Small ribosomal subunit protein bS6 (124 aa).

The interval 96–124 (ETAPSPMMKEVQREEARKAAQTTTEGQPA) is disordered. Over residues 115-124 (AQTTTEGQPA) the composition is skewed to polar residues.

The protein belongs to the bacterial ribosomal protein bS6 family.

Binds together with bS18 to 16S ribosomal RNA. The protein is Small ribosomal subunit protein bS6 of Cupriavidus metallidurans (strain ATCC 43123 / DSM 2839 / NBRC 102507 / CH34) (Ralstonia metallidurans).